Reading from the N-terminus, the 1150-residue chain is DNA polymerase (1150 aa).

The disordered stretch occupies residues 1–53 (MSLVQGHGTSGLFTEPPNPINQQESSGPSLPAQDAAQAFASSPRAGATSTIVN).

Belongs to the DNA polymerase type-B family. As to quaternary structure, heterodimer with the terminal protein; this heterodimer binds to bp 9 to 18 of the genome. Forms a complex with viral pTP, DBP and hosts NFIA and POU2F1/OCT1 for initiation of replication.

It localises to the host nucleus. It catalyses the reaction DNA(n) + a 2'-deoxyribonucleoside 5'-triphosphate = DNA(n+1) + diphosphate. Its function is as follows. Eukaryotic-type DNA polymerase involved in viral genomic replication. DNA synthesis is protein primed, and acts in a strand displacement replication. Assembles in complex with viral pTP, DBP, host NFIA and host POU2F1/OCT1 on viral origin of replication. The polymerase covalently transfers dCMP onto pTP, thereby initiating complementary strand synthesis. The polypeptide is DNA polymerase (Canis lupus familiaris (Dog)).